The chain runs to 338 residues: Nicotinate-nucleotide--dimethylbenzimidazole phosphoribosyltransferase (338 aa).

Glutamate 305 acts as the Proton acceptor in catalysis.

It belongs to the CobT family.

It catalyses the reaction 5,6-dimethylbenzimidazole + nicotinate beta-D-ribonucleotide = alpha-ribazole 5'-phosphate + nicotinate + H(+). Its pathway is nucleoside biosynthesis; alpha-ribazole biosynthesis; alpha-ribazole from 5,6-dimethylbenzimidazole: step 1/2. Its function is as follows. Catalyzes the synthesis of alpha-ribazole-5'-phosphate from nicotinate mononucleotide (NAMN) and 5,6-dimethylbenzimidazole (DMB). The sequence is that of Nicotinate-nucleotide--dimethylbenzimidazole phosphoribosyltransferase from Rhizobium etli (strain ATCC 51251 / DSM 11541 / JCM 21823 / NBRC 15573 / CFN 42).